The chain runs to 35 residues: Mu-thomitoxin-Hme1c (35 aa).

Disulfide bonds link C2–C18, C9–C23, and C17–C34.

It belongs to the neurotoxin 07 (Beta/delta-agtx) family. As to expression, expressed by the venom gland.

The protein localises to the secreted. In terms of biological role, gating-modifier toxin that inhibits mammalian and insect voltage-gated sodium channels. It shifts the voltage dependence of channel activation to more positive voltages. It shows potent activity on Nav1.4/SCN4A (IC(50)=103 nM), Nav1.5/SCN5A (IC(50)=268 nM) and Para/DmNav1 (IC(50)=555 nM) and lower activities on Nav1.2/SCN2A (IC(50)=1447 nM) and Nav1.6/SCN8A (IC(50)=3504 nM). In addition, at a concentration of 1 uM, the toxin inhibits 90-100% of sodium current through Nav1.2/SCN2A, Nav1.4/SCN4A, Nav1.5/SCN5A, Nav1.6/SCN8A and Para/DmNav1 channels, when the voltage of maximal activation of the channel in control conditions is applied. It binds to the S3-S4 helix-loop-helix motif in the voltage-sensing domain of repeat 1 (shown on hNav1.4/SCN4A). The toxin is amphiphilic and binds to both neutral and negatively charged lipid vesicles with high affinity. The hydrophobic face lies on the opposite side to the hydrophobic faces of classical gating modifiers. This Heriaeus mellotteei (Crab spider) protein is Mu-thomitoxin-Hme1c.